A 393-amino-acid polypeptide reads, in one-letter code: Phosphoglycerate kinase (393 aa).

Substrate is bound by residues 21–23 (DFN), Arg37, 60–63 (HLGR), Arg119, and Arg152. Residues Lys202, Glu323, and 349 to 352 (GGDT) contribute to the ATP site.

Belongs to the phosphoglycerate kinase family. In terms of assembly, monomer.

The protein localises to the cytoplasm. The catalysed reaction is (2R)-3-phosphoglycerate + ATP = (2R)-3-phospho-glyceroyl phosphate + ADP. It participates in carbohydrate degradation; glycolysis; pyruvate from D-glyceraldehyde 3-phosphate: step 2/5. The sequence is that of Phosphoglycerate kinase from Desulforudis audaxviator (strain MP104C).